Here is a 301-residue protein sequence, read N- to C-terminus: Beta-1,3-galactosyltransferase 5 (301 aa).

The Cytoplasmic segment spans residues 1–7 (MAFPKMR). Residues 8–28 (LMYVCLLVLGALCLYFSMYSL) form a helical; Signal-anchor for type II membrane protein membrane-spanning segment. The Lumenal portion of the chain corresponds to 29–301 (NLFKEQSFVY…LLDYWQALEN (273 aa)). 3 N-linked (GlcNAc...) asparagine glycosylation sites follow: asparagine 130, asparagine 174, and asparagine 231.

This sequence belongs to the glycosyltransferase 31 family.

It is found in the golgi apparatus membrane. The enzyme catalyses a globoside Gb4Cer (d18:1(4E)) + UDP-alpha-D-galactose = a globoside GalGb4Cer (d18:1(4E)) + UDP + H(+). Its pathway is protein modification; protein glycosylation. In terms of biological role, catalyzes the transfer of Gal to GlcNAc-based acceptors with a preference for the core3 O-linked glycan GlcNAc(beta1,3)GalNAc structure. Can use glycolipid LC3Cer as an efficient acceptor. This is Beta-1,3-galactosyltransferase 5 (B3GALT5) from Pan paniscus (Pygmy chimpanzee).